Reading from the N-terminus, the 816-residue chain is Bifunctional aspartokinase/homoserine dehydrogenase (816 aa).

Residues 1–250 form an aspartokinase region; the sequence is MKLLKFGGTS…VPNARLLKSI (250 aa). The tract at residues 251-471 is interface; sequence SYQEAMELSY…FNKKTIHMFL (221 aa). Positions 402–479 constitute an ACT domain; the sequence is IVGSNIYKKH…FLIGIGGIGS (78 aa). Positions 472–816 are homoserine dehydrogenase; sequence IGIGGIGSTL…VFSDLLRTLS (345 aa). 3 residues coordinate NAD(+): Gly476, Ile477, and Ala505. Ile477 is an NADP(+) binding site. Ile477 is a binding site for NADPH. The NADP(+) site is built by Lys508 and Thr556. Thr556 lines the NAD(+) pocket. NADPH contacts are provided by Thr556, Ser557, Ser578, and Lys580. Residues Ser578 and Lys580 each contribute to the NADP(+) site. Residues Glu607, Val610, Ala612, and Leu614 each coordinate Na(+). Gly665 and Glu668 together coordinate NADP(+). L-homoserine contacts are provided by Glu668 and Asp679. Catalysis depends on Lys683, which acts as the Proton donor. Gly799 is a binding site for NAD(+). Position 799 (Gly799) interacts with NADP(+). Position 799 (Gly799) interacts with NADPH.

This sequence in the N-terminal section; belongs to the aspartokinase family. In the C-terminal section; belongs to the homoserine dehydrogenase family. Homotetramer. A metal cation is required as a cofactor.

It carries out the reaction L-homoserine + NADP(+) = L-aspartate 4-semialdehyde + NADPH + H(+). The catalysed reaction is L-homoserine + NAD(+) = L-aspartate 4-semialdehyde + NADH + H(+). It catalyses the reaction L-aspartate + ATP = 4-phospho-L-aspartate + ADP. The protein operates within amino-acid biosynthesis; L-lysine biosynthesis via DAP pathway; (S)-tetrahydrodipicolinate from L-aspartate: step 1/4. Its pathway is amino-acid biosynthesis; L-methionine biosynthesis via de novo pathway; L-homoserine from L-aspartate: step 1/3. It participates in amino-acid biosynthesis; L-methionine biosynthesis via de novo pathway; L-homoserine from L-aspartate: step 3/3. It functions in the pathway amino-acid biosynthesis; L-threonine biosynthesis; L-threonine from L-aspartate: step 1/5. The protein operates within amino-acid biosynthesis; L-threonine biosynthesis; L-threonine from L-aspartate: step 3/5. Functionally, bifunctional aspartate kinase and homoserine dehydrogenase that catalyzes the first and the third steps toward the synthesis of lysine, methionine and threonine from aspartate. The sequence is that of Bifunctional aspartokinase/homoserine dehydrogenase (thrA) from Buchnera aphidicola subsp. Acyrthosiphon pisum (strain APS) (Acyrthosiphon pisum symbiotic bacterium).